A 317-amino-acid polypeptide reads, in one-letter code: Melanocyte-stimulating hormone receptor (317 aa).

The Extracellular portion of the chain corresponds to 1–37 (MPMQGAQRRLLGSLNSTPTATPNLGLAANHTGAPCLE). A glycan (N-linked (GlcNAc...) asparagine) is linked at Asn29. Residues 38–63 (VSIPDGLFLSLGLVSLVENVLVVAAI) traverse the membrane as a helical segment. Residues 64–72 (AKNRNLHSP) are Cytoplasmic-facing. The chain crosses the membrane as a helical span at residues 73-93 (MYCFICCLALSDLLVSGSNML). The Extracellular segment spans residues 94 to 118 (EMAVILLLEAGALATRASVVQQLQN). The chain crosses the membrane as a helical span at residues 119-140 (TIDVLTCSSMLCSLCFLGAIAV). Over 141–163 (DRYVSIFYALRYHSIVTLPRARR) the chain is Cytoplasmic. A helical membrane pass occupies residues 164 to 183 (AIAAIWVASVLSSTLFIAYC). Over 184–191 (DHAAVLLC) the chain is Extracellular. Residues 192-211 (LVVFFLAMLVLMAVLYVHML) form a helical membrane-spanning segment. Residues 212–240 (ARACQHAQGITRLHKRQLPAHQGFGLRGA) are Cytoplasmic-facing. A helical membrane pass occupies residues 241 to 266 (ATLTILLGIFFLCWGPFFLHLMLVVL). Over 267–279 (CPQHLTCSCIFKN) the chain is Extracellular. The chain crosses the membrane as a helical span at residues 280-300 (FKVFLTLIICNTIIDPLIYAF). Residues 301 to 317 (RSQELCRTLREVLLCSW) are Cytoplasmic-facing. Residue Cys315 is the site of S-palmitoyl cysteine attachment.

The protein belongs to the G-protein coupled receptor 1 family. Interacts with MGRN1, but does not undergo MGRN1-mediated ubiquitination; this interaction competes with GNAS-binding and thus inhibits agonist-induced cAMP production. Interacts with OPN3; the interaction results in a decrease in MC1R-mediated cAMP signaling and ultimately a decrease in melanin production in melanocytes.

Its subcellular location is the cell membrane. Its function is as follows. Receptor for MSH (alpha, beta and gamma) and ACTH. The activity of this receptor is mediated by G proteins which activate adenylate cyclase. Mediates melanogenesis, the production of eumelanin (black/brown) and phaeomelanin (red/yellow), via regulation of cAMP signaling in melanocytes. This Alouatta pigra (Guatemalan howler monkey) protein is Melanocyte-stimulating hormone receptor (MC1R).